The following is a 353-amino-acid chain: UPF0283 membrane protein YcjF (353 aa).

3 consecutive transmembrane segments (helical) span residues 70–90 (MVMGGLALFGASVVGQGVQWT), 100–120 (VALGGCAAGALIIGAGVGSVV), and 213–233 (ESTLMIAVSPLALVDMAFIAW).

Belongs to the UPF0283 family.

It localises to the cell inner membrane. The chain is UPF0283 membrane protein YcjF from Escherichia coli O7:K1 (strain IAI39 / ExPEC).